Consider the following 365-residue polypeptide: TD and POZ domain-containing protein 3 (365 aa).

One can recognise an MATH domain in the interval 19 to 149 (KFCYNWTISN…EDQFTICCKV (131 aa)). Positions 188-250 (TDCCLLVAGH…EMMGFIYTGK (63 aa)) constitute a BTB domain.

The protein belongs to the Tdpoz family.

This chain is TD and POZ domain-containing protein 3, found in Mus musculus (Mouse).